Consider the following 341-residue polypeptide: tRNA N6-adenosine threonylcarbamoyltransferase (341 aa).

Fe cation contacts are provided by H114 and H118. Substrate contacts are provided by residues 136-140 (LVSGG), D169, G182, D186, and N278. D304 is a binding site for Fe cation.

It belongs to the KAE1 / TsaD family. The cofactor is Fe(2+).

It localises to the cytoplasm. The enzyme catalyses L-threonylcarbamoyladenylate + adenosine(37) in tRNA = N(6)-L-threonylcarbamoyladenosine(37) in tRNA + AMP + H(+). Required for the formation of a threonylcarbamoyl group on adenosine at position 37 (t(6)A37) in tRNAs that read codons beginning with adenine. Is involved in the transfer of the threonylcarbamoyl moiety of threonylcarbamoyl-AMP (TC-AMP) to the N6 group of A37, together with TsaE and TsaB. TsaD likely plays a direct catalytic role in this reaction. This Lactococcus lactis subsp. cremoris (strain MG1363) protein is tRNA N6-adenosine threonylcarbamoyltransferase.